The sequence spans 56 residues: Large ribosomal subunit protein bL32 (56 aa).

A disordered region spans residues 1 to 37; that stretch reads MAVQQNKKSRSRRDMRRSHDALTTAAVSVDKTTGETH. Residues 7 to 16 show a composition bias toward basic residues; that stretch reads KKSRSRRDMR.

Belongs to the bacterial ribosomal protein bL32 family.

The protein is Large ribosomal subunit protein bL32 of Haemophilus ducreyi (strain 35000HP / ATCC 700724).